A 206-amino-acid chain; its full sequence is MSRTLVLVRHGQSEWNLKNLFTGWRDVDLTEQGHAEAKAAGQKLKARGLKFDIAFTSALSRAQKTCQHILDAVGQSDLKTIRDQALNERDYGDLSGLNKDDARKKWGEEQVHVWRRSYDVSPPGGESLKDTGARVWPYYLHDLQPHVLRGGTVLVAAHGNSLRALIMALDGKSGEEIVKLELGTGVPVIYQLNADSTVASKEVLEG.

Substrate contacts are provided by residues 9–16 (RHGQSEWN), 22–23 (TG), Arg61, 88–91 (ERDY), Lys99, 115–116 (RR), and 159–160 (GN). His10 (tele-phosphohistidine intermediate) is an active-site residue. The Proton donor/acceptor role is filled by Glu88.

The protein belongs to the phosphoglycerate mutase family. BPG-dependent PGAM subfamily. In terms of assembly, homodimer.

The enzyme catalyses (2R)-2-phosphoglycerate = (2R)-3-phosphoglycerate. The protein operates within carbohydrate degradation; glycolysis; pyruvate from D-glyceraldehyde 3-phosphate: step 3/5. Its function is as follows. Catalyzes the interconversion of 2-phosphoglycerate and 3-phosphoglycerate. The protein is 2,3-bisphosphoglycerate-dependent phosphoglycerate mutase of Mesorhizobium japonicum (strain LMG 29417 / CECT 9101 / MAFF 303099) (Mesorhizobium loti (strain MAFF 303099)).